The sequence spans 538 residues: MAKIIKYDEEARQGMLEGLDELANTVKVTLGPRGRNVVLDKTYGAPTITNDGVSIAKEIDLEDPYARIGAELVKEVAKKTDDVAGDGTTTATVLAQSLVHEGLRNVTAGSNPIALRRGIEKASDAIVERLLSNAKPVETKEQIAATATISAGDPEVGDKIAEALDKVGQDGVVTVEDNNKFGLDLEFTEGMRFDKGYISPYFVTNADEQTAVLEDPYILLTSGKVSSQQDIVHIAELVMKSGKPLLIVAEDVDGEALPTLVLNKIRGTFNTVAVKAPGFGDRRKAMLQDMAILTGAQVVSDELGLKLDSIDDTVFGHASKVIVSKDETTIVSGAGSKEDVAARVAQIRSEIEDSDSDYDREKLQERLAKLAGGVAVIKVGAATEVEAKERKHRIEDAVRNAKAAIEEGLLPGGGVALVQAAADVQKNVKLEGDEATGAGIVFRAIEAPLKQIAQNAGFSGEVVIDKVRTLPAGSGLNAATGEYEDLLSAGVTDPVKVTRSALQNAASIAGLFLTTEAVVANKPEPPAPAAAPNPDMGY.

Residues 29 to 32 (TLGP), 86 to 90 (DGTTT), G413, 477 to 479 (NAA), and D493 contribute to the ATP site.

It belongs to the chaperonin (HSP60) family. As to quaternary structure, forms a cylinder of 14 subunits composed of two heptameric rings stacked back-to-back. Interacts with the co-chaperonin GroES.

The protein resides in the cytoplasm. It carries out the reaction ATP + H2O + a folded polypeptide = ADP + phosphate + an unfolded polypeptide.. Functionally, together with its co-chaperonin GroES, plays an essential role in assisting protein folding. The GroEL-GroES system forms a nano-cage that allows encapsulation of the non-native substrate proteins and provides a physical environment optimized to promote and accelerate protein folding. The polypeptide is Chaperonin GroEL (Scardovia inopinata (Bifidobacterium inopinatum)).